A 274-amino-acid chain; its full sequence is S-adenosylmethionine-dependent nucleotide dehydratase (274 aa).

The Radical SAM core domain occupies 1–215 (MAYKVNLHIT…VERHAEVSHD (215 aa)). [4Fe-4S] cluster-binding residues include cysteine 13, cysteine 17, and cysteine 20.

Belongs to the radical SAM superfamily. Prokaryotic viperin family. The cofactor is [4Fe-4S] cluster.

The catalysed reaction is CTP + AH2 + S-adenosyl-L-methionine = 3'-deoxy-3',4'-didehydro-CTP + 5'-deoxyadenosine + L-methionine + A + H2O + H(+). Its function is as follows. Expression of pVip6 in E.coli (strain MG1655) confers resistance to phages lambda, P1, SECphi6, SECphi8 and T7. Catalyzes the conversion of cytidine triphosphate (CTP) to 3'-deoxy-3',4'-didehydro-CTP (ddhCTP), probably via a SAM-dependent radical mechanism. The modified nucleotide represses transcription from T7 RNA polymerase-directed genes (possibly by acting as chain terminators), strongly suggesting these nucleotides block viral polymerase transcription. This is S-adenosylmethionine-dependent nucleotide dehydratase from Selenomonas ruminantium.